A 161-amino-acid polypeptide reads, in one-letter code: MKYDTSELCDIYHEEVNVVEPLFSNFGGRTSFGGKITTVKCFEDNGLLFDLFEENGLGRVLLIDGGGSVRRALINAELARLATQNEWEGIVVYGAVRQVDDLAELDIGIQAMAAIPVGAGSEGIGESDIRVNFGGVTFFSGDHLYADNTGIILSEDPLDIE.

This sequence belongs to the RraA family. In terms of assembly, homotrimer. Binds to both RNA-binding sites in the C-terminal region of Rne and to RhlB.

The protein localises to the cytoplasm. Globally modulates RNA abundance by binding to RNase E (Rne) and regulating its endonucleolytic activity. Can modulate Rne action in a substrate-dependent manner by altering the composition of the degradosome. Modulates RNA-binding and helicase activities of the degradosome. The polypeptide is Regulator of ribonuclease activity A (Pectobacterium atrosepticum (strain SCRI 1043 / ATCC BAA-672) (Erwinia carotovora subsp. atroseptica)).